The following is a 143-amino-acid chain: Nucleoside diphosphate kinase (143 aa).

ATP is bound by residues Lys11, Phe59, Arg87, Thr93, Arg104, and Asn114. His117 (pros-phosphohistidine intermediate) is an active-site residue.

Belongs to the NDK family. In terms of assembly, homotetramer. Requires Mg(2+) as cofactor.

The protein resides in the cytoplasm. It carries out the reaction a 2'-deoxyribonucleoside 5'-diphosphate + ATP = a 2'-deoxyribonucleoside 5'-triphosphate + ADP. The enzyme catalyses a ribonucleoside 5'-diphosphate + ATP = a ribonucleoside 5'-triphosphate + ADP. Functionally, major role in the synthesis of nucleoside triphosphates other than ATP. The ATP gamma phosphate is transferred to the NDP beta phosphate via a ping-pong mechanism, using a phosphorylated active-site intermediate. The protein is Nucleoside diphosphate kinase of Shewanella sediminis (strain HAW-EB3).